The primary structure comprises 373 residues: Peptide chain release factor 1-like, mitochondrial (373 aa).

A mitochondrion-targeting transit peptide spans 1–13; the sequence is MRSGFLRSARRLW. Residues 56 to 111 adopt a coiled-coil conformation; it reads QLAAAARLLNEKERELRDTESLLHDENEDLKKLAESEIALCQKEIAELKHRIISLL. The segment at 229-293 is GGQ domain; sequence PKDLRIDTKR…LRARLYSMRL (65 aa). A GGQ motif is present at residues 243-245; the sequence is GGQ. N5-methylglutamine is present on glutamine 245.

Belongs to the prokaryotic/mitochondrial release factor family. Methylation of glutamine in the GGQ triplet by HEMK1 is conserved from bacteria to mammals.

The protein resides in the mitochondrion. Its function is as follows. Mitochondrial peptide chain release factor that directs the termination of translation in response to the peptide chain termination codons UAA and UAG. The chain is Peptide chain release factor 1-like, mitochondrial (Mtrf1l) from Rattus norvegicus (Rat).